Here is a 315-residue protein sequence, read N- to C-terminus: Leukocidin-S subunit (315 aa).

The N-terminal stretch at 1–29 (MLKNKILATTLSVSLLAPLANPLLENAKA) is a signal peptide.

This sequence belongs to the aerolysin family. Leukocidin consists of two protein components: F and S.

Its function is as follows. Leukocidin causes cytotoxic changes in polymorphonuclear leukocytes. The polypeptide is Leukocidin-S subunit (lukS) (Staphylococcus aureus).